The chain runs to 173 residues: UPF0398 protein SMU_470 (173 aa).

The protein belongs to the UPF0398 family.

The chain is UPF0398 protein SMU_470 from Streptococcus mutans serotype c (strain ATCC 700610 / UA159).